Consider the following 206-residue polypeptide: Ras-related protein Rab7 (206 aa).

GTP contacts are provided by residues 15-22 (GDSGVGKT), 63-67 (DTAGQ), and 125-128 (NKID). S-geranylgeranyl cysteine attachment occurs at residues Cys-204 and Cys-206. The residue at position 206 (Cys-206) is a Cysteine methyl ester.

It belongs to the small GTPase superfamily. Rab family.

The protein localises to the cell membrane. In terms of biological role, protein transport. Probably involved in vesicular traffic. This Pisum sativum (Garden pea) protein is Ras-related protein Rab7.